The following is a 643-amino-acid chain: E3 ubiquitin-protein ligase AMFR (643 aa).

Positions 39–67 are disordered; it reads PEAGPGEPDQLTASLQPEPPAPARPSAGG. Transmembrane regions (helical) follow at residues 82–102, 122–142, 145–165, 186–206, 215–235, and 276–296; these read LFVW…AKLI, FWNF…VQTV, VVMW…VQLC, VLSL…VCSI, TLAF…HVIL, and HIHM…VIFM. The RING-type zinc finger occupies 341 to 379; that stretch reads CAICWDSMQAARKLPCGHLFHNSCLRSWLEQDTSCPTCR. The helical transmembrane segment at 429–449 threads the bilayer; it reads IASWLPSFSVEVMHTTNILGI. The CUE domain occupies 456–498; that stretch reads QLNAMAHQIQEMFPQVPYHLVLQDLQLTRSVEITTDNILEGRI. Disordered stretches follow at residues 504–579 and 596–624; these read TQRS…DERQ and RFLN…PVTL. S516, S523, and S542 each carry phosphoserine. Over residues 548 to 563 the composition is skewed to acidic residues; it reads TLDFGEVEVEPSEVED. Residues 564 to 579 are compositionally biased toward basic and acidic residues; that stretch reads FEARGSRFSKSADERQ. Residues 622 to 640 form a VCP/p97-interacting motif (VIM) region; that stretch reads VTLRRRMLAAAAERRLQKQ.

Interacts with RNF5. Also forms an ERAD complex containing VCP/p97, NGLY1; PSMC1; SAKS1 and RAD23B required for coupling retrotranslocation, ubiquitination and deglycosylation. Interacts with DERL1. Interacts (through a region distinct from the RING finger) with UBE2G2/UBC7. Component of the VCP/p97-AMFR/gp78 complex that enhances VCP/p97 binding to polyubiquitinated proteins for their degradation by the endoplasmic reticulum-associated degradation (ERAD) pathway. Interacts (via the VIM) with VCP/p97. Interacts (via its membrane domain) with INSIG1; the interaction initiates the sterol-mediated ubiquitination and degradation of HMGCR by the ERAD pathway. Interacts with AUP1, UBE2G2 and RNF139/TRC8; interaction with AUP1 facilitates interaction of AMFR with ubiquitin-conjugating enzyme UBE2G2 and ubiquitin ligase RNF139, leading to sterol-induced ubiquitination of HMGCR and its subsequent proteasomal degradation. Interacts with BAG6. Interacts with USP13 (via UBA 2 domain); the interaction is direct. Interacts with LMBR1L. Interacts with UBAC2 and CTNNB1. Interacts with C18orf32. As to quaternary structure, (Microbial infection) Interacts with Staphylococcus aureus HIgB; this interaction regulates AMFR-mediated inflammation by promoting TAB3 ubiquitination to promote TAB3-TAK1 complex formation. Post-translationally, palmitoylation of the RING-type zing finger by ZDHHC6 promotes localization to the peripheral endoplasmic reticulum. In terms of tissue distribution, widely expressed.

The protein localises to the endoplasmic reticulum membrane. It catalyses the reaction [E2 ubiquitin-conjugating enzyme]-S-ubiquitinyl-L-cysteine + [acceptor protein]-L-cysteine = [E2 ubiquitin-conjugating enzyme]-L-cysteine + [acceptor protein]-S-ubiquitinyl-L-cysteine.. It participates in protein modification; protein ubiquitination. Functionally, E3 ubiquitin-protein ligase that mediates the polyubiquitination of lysine and cysteine residues on target proteins, such as CD3D, CYP3A4, CFTR, INSIG1, SOAT2/ACAT2 and APOB for proteasomal degradation. Component of a VCP/p97-AMFR/gp78 complex that participates in the final step of endoplasmic reticulum-associated degradation (ERAD). The VCP/p97-AMFR/gp78 complex is involved in the sterol-accelerated ERAD degradation of HMGCR through binding to the HMGCR-INSIG1 complex at the ER membrane. In addition, interaction of AMFR with AUP1 facilitates interaction of AMFR with ubiquitin-conjugating enzyme UBE2G2 and ubiquitin ligase RNF139, leading to sterol-induced HMGCR ubiquitination. The ubiquitinated HMGCR is then released from the ER into the cytosol for subsequent destruction. In addition to ubiquitination on lysine residues, catalyzes ubiquitination on cysteine residues: together with INSIG1, mediates polyubiquitination of SOAT2/ACAT2 at 'Cys-277', leading to its degradation when the lipid levels are low. Catalyzes ubiquitination and subsequent degradation of INSIG1 when cells are depleted of sterols. Mediates polyubiquitination of INSIG2 at 'Cys-215' in some tissues, leading to its degradation. Also regulates ERAD through the ubiquitination of UBL4A a component of the BAG6/BAT3 complex. Also acts as a scaffold protein to assemble a complex that couples ubiquitination, retranslocation and deglycosylation. Mediates tumor invasion and metastasis as a receptor for the GPI/autocrine motility factor. In association with LMBR1L and UBAC2, negatively regulates the canonical Wnt signaling pathway in the lymphocytes by promoting the ubiquitin-mediated degradation of CTNNB1 and Wnt receptors FZD6 and LRP6. Regulates NF-kappa-B and MAPK signaling pathways by mediating 'Lys-27'-linked polyubiquitination of TAB3 and promoting subsequent TAK1/MAP3K7 activation. Required for proper lipid homeostasis. The protein is E3 ubiquitin-protein ligase AMFR of Homo sapiens (Human).